We begin with the raw amino-acid sequence, 48 residues long: ATP synthase protein 8 (48 aa).

A helical transmembrane segment spans residues 13–32; sequence LTYGFLLMITLLILFSQFFL.

The protein belongs to the ATPase protein 8 family. In terms of assembly, F-type ATPases have 2 components, CF(1) - the catalytic core - and CF(0) - the membrane proton channel. In yeast, the dimeric form of ATP synthase consists of 17 polypeptides: alpha, beta, gamma, delta, epsilon, 4 (B), 5 (OSCP), 6 (A), 8, 9 (C), d, E (Tim11), f, g, h, i/j and k.

The protein localises to the mitochondrion membrane. Functionally, mitochondrial membrane ATP synthase (F(1)F(0) ATP synthase or Complex V) produces ATP from ADP in the presence of a proton gradient across the membrane which is generated by electron transport complexes of the respiratory chain. F-type ATPases consist of two structural domains, F(1) - containing the extramembraneous catalytic core and F(0) - containing the membrane proton channel, linked together by a central stalk and a peripheral stalk. During catalysis, ATP synthesis in the catalytic domain of F(1) is coupled via a rotary mechanism of the central stalk subunits to proton translocation. Part of the complex F(0) domain. Minor subunit located with subunit a in the membrane. The protein is ATP synthase protein 8 (ATP8) of Saccharomyces cerevisiae (strain ATCC 204508 / S288c) (Baker's yeast).